A 96-amino-acid polypeptide reads, in one-letter code: MNIRPLHDRVIVERQEVESKSAGGIVLTGSAAEKSTRGTVLAVGKGRILENGTVQPLDVKVGDSVIFAEGYGTKSEKIDGKEVLIMSENDIMAIVE.

It belongs to the GroES chaperonin family. Heptamer of 7 subunits arranged in a ring. Interacts with the chaperonin GroEL.

It is found in the cytoplasm. Its function is as follows. Together with the chaperonin GroEL, plays an essential role in assisting protein folding. The GroEL-GroES system forms a nano-cage that allows encapsulation of the non-native substrate proteins and provides a physical environment optimized to promote and accelerate protein folding. GroES binds to the apical surface of the GroEL ring, thereby capping the opening of the GroEL channel. This chain is Co-chaperonin GroES, found in Aliivibrio fischeri (strain ATCC 700601 / ES114) (Vibrio fischeri).